The primary structure comprises 611 residues: 4-hydroxy-3-methylbut-2-en-1-yl diphosphate synthase (flavodoxin) (611 aa).

Positions 520, 523, 554, and 561 each coordinate [4Fe-4S] cluster.

This sequence belongs to the IspG family. The cofactor is [4Fe-4S] cluster.

It catalyses the reaction (2E)-4-hydroxy-3-methylbut-2-enyl diphosphate + oxidized [flavodoxin] + H2O + 2 H(+) = 2-C-methyl-D-erythritol 2,4-cyclic diphosphate + reduced [flavodoxin]. The protein operates within isoprenoid biosynthesis; isopentenyl diphosphate biosynthesis via DXP pathway; isopentenyl diphosphate from 1-deoxy-D-xylulose 5-phosphate: step 5/6. Functionally, converts 2C-methyl-D-erythritol 2,4-cyclodiphosphate (ME-2,4cPP) into 1-hydroxy-2-methyl-2-(E)-butenyl 4-diphosphate. The chain is 4-hydroxy-3-methylbut-2-en-1-yl diphosphate synthase (flavodoxin) from Parabacteroides distasonis (strain ATCC 8503 / DSM 20701 / CIP 104284 / JCM 5825 / NCTC 11152).